A 121-amino-acid polypeptide reads, in one-letter code: Small ribosomal subunit protein uS13 (121 aa).

Positions 94–121 (GLPVRGQNTKNNSRTRKGPRRTVANKKK) are disordered. The segment covering 106-121 (SRTRKGPRRTVANKKK) has biased composition (basic residues).

The protein belongs to the universal ribosomal protein uS13 family. In terms of assembly, part of the 30S ribosomal subunit. Forms a loose heterodimer with protein S19. Forms two bridges to the 50S subunit in the 70S ribosome.

Its function is as follows. Located at the top of the head of the 30S subunit, it contacts several helices of the 16S rRNA. In the 70S ribosome it contacts the 23S rRNA (bridge B1a) and protein L5 of the 50S subunit (bridge B1b), connecting the 2 subunits; these bridges are implicated in subunit movement. Contacts the tRNAs in the A and P-sites. This chain is Small ribosomal subunit protein uS13, found in Halalkalibacterium halodurans (strain ATCC BAA-125 / DSM 18197 / FERM 7344 / JCM 9153 / C-125) (Bacillus halodurans).